The sequence spans 366 residues: ERCC4 domain-containing protein EP364R (366 aa).

The 99-residue stretch at 3 to 101 folds into the ERCC4 domain; that stretch reads FLVADHREHH…QLYFFVEGPA (99 aa). 2 stretches are compositionally biased toward polar residues: residues 320–331 and 349–366; these read RPTMQVATQPAA and PTGHQTLSKEMSLNTVRC. The disordered stretch occupies residues 320–366; it reads RPTMQVATQPAATQPLHKVSDDASSDASSPTGHQTLSKEMSLNTVRC.

It belongs to the asfivirus EP364R family.

Plays a role in the inhibition of type I interferon signaling pathway. Mechanistically, specifically interacts with 2',3'-cGAMP and cleaves it via its phosphodiesterase activity. In turn, prevents 2',3'-cGAMP interaction with host ER-resident STING1 leading to inhibition of downstream signaling pathway and type I interferon production. This chain is ERCC4 domain-containing protein EP364R, found in Ornithodoros (relapsing fever ticks).